The primary structure comprises 485 residues: tRNA sulfurtransferase (485 aa).

Residues Glu-61–Arg-165 form the THUMP domain. ATP-binding positions include Leu-183 to Ile-184, Lys-265, Gly-287, and Gln-296. Cys-344 and Cys-456 are oxidised to a cystine. Positions Leu-404–Asn-483 constitute a Rhodanese domain. Cys-456 (cysteine persulfide intermediate) is an active-site residue.

This sequence belongs to the ThiI family.

It localises to the cytoplasm. The enzyme catalyses [ThiI sulfur-carrier protein]-S-sulfanyl-L-cysteine + a uridine in tRNA + 2 reduced [2Fe-2S]-[ferredoxin] + ATP + H(+) = [ThiI sulfur-carrier protein]-L-cysteine + a 4-thiouridine in tRNA + 2 oxidized [2Fe-2S]-[ferredoxin] + AMP + diphosphate. The catalysed reaction is [ThiS sulfur-carrier protein]-C-terminal Gly-Gly-AMP + S-sulfanyl-L-cysteinyl-[cysteine desulfurase] + AH2 = [ThiS sulfur-carrier protein]-C-terminal-Gly-aminoethanethioate + L-cysteinyl-[cysteine desulfurase] + A + AMP + 2 H(+). It functions in the pathway cofactor biosynthesis; thiamine diphosphate biosynthesis. Its function is as follows. Catalyzes the ATP-dependent transfer of a sulfur to tRNA to produce 4-thiouridine in position 8 of tRNAs, which functions as a near-UV photosensor. Also catalyzes the transfer of sulfur to the sulfur carrier protein ThiS, forming ThiS-thiocarboxylate. This is a step in the synthesis of thiazole, in the thiamine biosynthesis pathway. The sulfur is donated as persulfide by IscS. The polypeptide is tRNA sulfurtransferase (Haemophilus influenzae (strain 86-028NP)).